The chain runs to 593 residues: MTADTAVSIPPYQVDDQDVIAELRARLGDDGFTLQATRTGMPVLWVSRERLLEVLKCLRHLPRPYVMLYDLHGVDERLRTQRRGLPDADFTVFYHLMSLERNSDLMVKVALSERDLNLPTATGIWPNANWYEREVWDLYGITFQGHPHLTRIMMPPTWEGHPLRKDYPARATEFDPFSLTLAKQQLEEEAARFRPEDWGMKRGGEHEDYMFLNLGPNHPSAHGAFRIILQLDGEEIVDCVPEIGYHHRGAEKMAERQSWHSFIPYTDRIDYLGGVMNNLPYVLAVEKLAGIKVPDRVDFIRVMLAEFFRITSHLLFLGTYIQDVGAMTPVFFTFTDRQRAYKVIEAITGFRLHPAWYRIGGVAHDLPRGWDKLVKEFVDWLPRRLDEYEKAALKNSILKARTIGVAQYNTKEALEWGTTGAGLRATGCDFDLRKARPYSGYEHFEFEVPLAANGDAYDRCMVRVEEMRQSIRIIDQCLKNMPEGPYKADHPLTTPPPKERTLQHIETLITHFLQVSWGPVMPAGEALQMIEATKGINSYYLTSDGSTMSYRTRIRTPSFAHLQQIPSVIRGSMVADLIAYLGSIDFVMADVDR.

Residues Met-1 to Gln-184 are NADH dehydrogenase I subunit C. The interval Asp-208–Arg-593 is NADH dehydrogenase I subunit D.

This sequence in the N-terminal section; belongs to the complex I 30 kDa subunit family. The protein in the C-terminal section; belongs to the complex I 49 kDa subunit family. As to quaternary structure, NDH-1 is composed of 13 different subunits. Subunits NuoB, CD, E, F, and G constitute the peripheral sector of the complex.

It localises to the cell inner membrane. The enzyme catalyses a quinone + NADH + 5 H(+)(in) = a quinol + NAD(+) + 4 H(+)(out). Functionally, NDH-1 shuttles electrons from NADH, via FMN and iron-sulfur (Fe-S) centers, to quinones in the respiratory chain. The immediate electron acceptor for the enzyme in this species is believed to be ubiquinone. Couples the redox reaction to proton translocation (for every two electrons transferred, four hydrogen ions are translocated across the cytoplasmic membrane), and thus conserves the redox energy in a proton gradient. The protein is NADH-quinone oxidoreductase subunit C/D of Ectopseudomonas mendocina (strain ymp) (Pseudomonas mendocina).